A 202-amino-acid polypeptide reads, in one-letter code: Endothelin-1 (202 aa).

The N-terminal stretch at 1 to 25 (MDYFPVIFSLLFVAFQGAPETAVLG) is a signal peptide. The propeptide occupies 26–50 (AELSPRAEKEVQSPPPSTSWRPRRS). A disordered region spans residues 28–47 (LSPRAEKEVQSPPPSTSWRP). 2 disulfides stabilise this stretch: cysteine 53–cysteine 67 and cysteine 55–cysteine 63. Residues 74–202 (VNTPERVVPY…DQKLIHNRAH (129 aa)) constitute a propeptide that is removed on maturation. The tract at residues 110 to 124 (CQCAHQKDKKCWNFC) is endothelin-like.

It belongs to the endothelin/sarafotoxin family.

It is found in the secreted. Endothelins are endothelium-derived vasoconstrictor peptides. Probable ligand for G-protein coupled receptors EDNRA and EDNRB which activates PTK2B, BCAR1, BCAR3 and, GTPases RAP1 and RHOA cascade in glomerular mesangial cells. Also binds the DEAR/FBXW7-AS1 receptor. Promotes mesenteric arterial wall remodeling via activation of ROCK signaling and subsequent colocalization of NFATC3 with F-actin filaments. NFATC3 then translocates to the nucleus where it subsequently promotes the transcription of the smooth muscle hypertrophy and differentiation marker ACTA2. This chain is Endothelin-1 (Edn1), found in Rattus norvegicus (Rat).